The chain runs to 225 residues: U2 small nuclear ribonucleoprotein B'' (225 aa).

Residues His-7–Thr-86 form the RRM 1 domain. The interval Asp-100–Val-144 is disordered. Lys-111 is modified (N6-acetyllysine; alternate). Residue Lys-111 forms a Glycyl lysine isopeptide (Lys-Gly) (interchain with G-Cter in SUMO2); alternate linkage. A compositionally biased stretch (low complexity) spans Met-113–Lys-123. A compositionally biased stretch (polar residues) spans Gly-127–Pro-140. Position 151 is a phosphotyrosine (Tyr-151). Residues Tyr-151–Lys-225 form the RRM 2 domain.

It belongs to the RRM U1 A/B'' family. Identified in the spliceosome B complex. Identified in the spliceosome C complex. Present in a spliceosome complex assembled in vitro, and composed of SNRPB2, HPRP8BP and CRNKL1. Contributes to the binding of stem loop IV of U2 snRNA with SNRPP1.

The protein localises to the nucleus. Involved in pre-mRNA splicing as component of the spliceosome. Associated with sn-RNP U2, where it contributes to the binding of stem loop IV of U2 snRNA. In Mus musculus (Mouse), this protein is U2 small nuclear ribonucleoprotein B'' (Snrpb2).